Consider the following 697-residue polypeptide: Long-chain-fatty-acid--CoA ligase 6 (697 aa).

A helical; Signal-anchor for type III membrane protein membrane pass occupies residues 25-45 (LSATTLVSVGALAAVLAYWLT). The Cytoplasmic portion of the chain corresponds to 46 to 697 (HRPKALQPPC…QIEELYLVSV (652 aa)).

Belongs to the ATP-dependent AMP-binding enzyme family. Mg(2+) serves as cofactor.

It is found in the mitochondrion outer membrane. Its subcellular location is the peroxisome membrane. It localises to the microsome membrane. The protein resides in the endoplasmic reticulum membrane. It carries out the reaction a long-chain fatty acid + ATP + CoA = a long-chain fatty acyl-CoA + AMP + diphosphate. The enzyme catalyses (5Z,8Z,11Z,14Z)-eicosatetraenoate + ATP + CoA = (5Z,8Z,11Z,14Z)-eicosatetraenoyl-CoA + AMP + diphosphate. It catalyses the reaction 15-hydroxy-(5Z,8Z,11Z,13E)-eicosatetraenoate + ATP + CoA = 15-hydroxy-(5Z,8Z,11Z,13E)-eicosatetraenoyl-CoA + AMP + diphosphate. The catalysed reaction is 12-hydroxy-(5Z,8Z,10E,14Z)-eicosatetraenoate + ATP + CoA = 12-hydroxy-(5Z,8Z,10E,14Z)-eicosatetraenoyl-CoA + AMP + diphosphate. It carries out the reaction 5-hydroxy-(6E,8Z,11Z,14Z)-eicosatetraenoate + ATP + CoA = 5-hydroxy-(6E,8Z,11Z,14Z)-eicosatetraenoyl-CoA + AMP + diphosphate. The enzyme catalyses hexadecanoate + ATP + CoA = hexadecanoyl-CoA + AMP + diphosphate. It catalyses the reaction (E)-hexadec-2-enoate + ATP + CoA = (2E)-hexadecenoyl-CoA + AMP + diphosphate. Its function is as follows. Catalyzes the conversion of long-chain fatty acids to their active form acyl-CoA for both synthesis of cellular lipids, and degradation via beta-oxidation. Plays an important role in fatty acid metabolism in brain and the acyl-CoAs produced may be utilized exclusively for the synthesis of the brain lipid. The chain is Long-chain-fatty-acid--CoA ligase 6 (Acsl6) from Mus musculus (Mouse).